Reading from the N-terminus, the 284-residue chain is Nucleoid occlusion protein (284 aa).

A DNA-binding region (H-T-H motif) is located at residues 143–162 (EALAQRVGKSQSAIANKMRL).

It belongs to the ParB family.

It is found in the cytoplasm. It localises to the nucleoid. In terms of biological role, effects nucleoid occlusion by binding relatively nonspecifically to DNA and preventing the assembly of the division machinery in the vicinity of the nucleoid, especially under conditions that disturb the cell cycle. It helps to coordinate cell division and chromosome segregation by preventing the formation of the Z ring through the nucleoid, which would cause chromosome breakage. The polypeptide is Nucleoid occlusion protein (Listeria monocytogenes serotype 4b (strain CLIP80459)).